Consider the following 228-residue polypeptide: 2,3-bisphosphoglycerate-dependent phosphoglycerate mutase (228 aa).

Residues 8–15 (RHGQSVWN), 21–22 (TG), Arg-60, 87–90 (ERHY), Lys-98, 114–115 (RR), and 183–184 (GN) each bind substrate. His-9 serves as the catalytic Tele-phosphohistidine intermediate. Catalysis depends on Glu-87, which acts as the Proton donor/acceptor.

The protein belongs to the phosphoglycerate mutase family. BPG-dependent PGAM subfamily.

It carries out the reaction (2R)-2-phosphoglycerate = (2R)-3-phosphoglycerate. Its pathway is carbohydrate degradation; glycolysis; pyruvate from D-glyceraldehyde 3-phosphate: step 3/5. Catalyzes the interconversion of 2-phosphoglycerate and 3-phosphoglycerate. The sequence is that of 2,3-bisphosphoglycerate-dependent phosphoglycerate mutase from Staphylococcus carnosus (strain TM300).